The sequence spans 691 residues: Elongation factor G (691 aa).

One can recognise a tr-type G domain in the interval 12 to 286; sequence NKLRNIGIMA…GIVRYLPSPL (275 aa). GTP is bound by residues 21-28, 85-89, and 139-142; these read AHIDAGKT, DTPGH, and NKMD.

Belongs to the TRAFAC class translation factor GTPase superfamily. Classic translation factor GTPase family. EF-G/EF-2 subfamily.

The protein localises to the cytoplasm. Its function is as follows. Catalyzes the GTP-dependent ribosomal translocation step during translation elongation. During this step, the ribosome changes from the pre-translocational (PRE) to the post-translocational (POST) state as the newly formed A-site-bound peptidyl-tRNA and P-site-bound deacylated tRNA move to the P and E sites, respectively. Catalyzes the coordinated movement of the two tRNA molecules, the mRNA and conformational changes in the ribosome. In Fervidobacterium nodosum (strain ATCC 35602 / DSM 5306 / Rt17-B1), this protein is Elongation factor G.